A 178-amino-acid polypeptide reads, in one-letter code: Interleukin-10 (178 aa).

The signal sequence occupies residues 1–18 (MHSSALLCCLVLLTGVRA). 2 disulfides stabilise this stretch: Cys-30–Cys-126 and Cys-80–Cys-132. N-linked (GlcNAc...) asparagine glycosylation is present at Asn-134.

Belongs to the IL-10 family. As to quaternary structure, homodimer. Interacts with IL10RA and IL10RB.

It localises to the secreted. Major immune regulatory cytokine that acts on many cells of the immune system where it has profound anti-inflammatory functions, limiting excessive tissue disruption caused by inflammation. Mechanistically, IL10 binds to its heterotetrameric receptor comprising IL10RA and IL10RB leading to JAK1 and STAT2-mediated phosphorylation of STAT3. In turn, STAT3 translocates to the nucleus where it drives expression of anti-inflammatory mediators. Targets antigen-presenting cells (APCs) such as macrophages and monocytes and inhibits their release of pro-inflammatory cytokines including granulocyte-macrophage colony-stimulating factor /GM-CSF, granulocyte colony-stimulating factor/G-CSF, IL-1 alpha, IL-1 beta, IL-6, IL-8 and TNF-alpha. Also interferes with antigen presentation by reducing the expression of MHC-class II and co-stimulatory molecules, thereby inhibiting their ability to induce T cell activation. In addition, controls the inflammatory response of macrophages by reprogramming essential metabolic pathways including mTOR signaling. The polypeptide is Interleukin-10 (IL10) (Macaca mulatta (Rhesus macaque)).